We begin with the raw amino-acid sequence, 625 residues long: Interferon-induced GTP-binding protein Mx2 (625 aa).

The 274-residue stretch at 29–302 (DLALPAIAVI…LVFHIGRCLP (274 aa)) folds into the Dynamin-type G domain. Positions 39 to 46 (GDQSSGKS) are G1 motif. 39–46 (GDQSSGKS) provides a ligand contact to GTP. The segment at 64 to 66 (VTR) is G2 motif. The tract at residues 140–143 (DLPG) is G3 motif. GTP is bound by residues 140-144 (DLPGI) and 209-212 (TKPD). A G4 motif region spans residues 209 to 212 (TKPD). The interval 241–244 (RCRG) is G5 motif. Residues 539–625 (REELTCHLKS…TEALKYLAKF (87 aa)) enclose the GED domain.

It belongs to the TRAFAC class dynamin-like GTPase superfamily. Dynamin/Fzo/YdjA family.

It is found in the cytoplasm. The polypeptide is Interferon-induced GTP-binding protein Mx2 (mx2) (Ictalurus punctatus (Channel catfish)).